The sequence spans 387 residues: Phosphoglycerate kinase (387 aa).

Substrate is bound by residues 21–23 (DLN), R36, 59–62 (HLGR), R113, and R146. Residues K197, E314, and 340–343 (GGDT) each bind ATP.

The protein belongs to the phosphoglycerate kinase family. As to quaternary structure, monomer.

It is found in the cytoplasm. The enzyme catalyses (2R)-3-phosphoglycerate + ATP = (2R)-3-phospho-glyceroyl phosphate + ADP. The protein operates within carbohydrate degradation; glycolysis; pyruvate from D-glyceraldehyde 3-phosphate: step 2/5. This chain is Phosphoglycerate kinase, found in Marinomonas sp. (strain MWYL1).